We begin with the raw amino-acid sequence, 395 residues long: Elongation factor Tu (395 aa).

In terms of domain architecture, tr-type G spans 10–205; it reads KVHMNVGTIG…AMDSYFEDPV (196 aa). The G1 stretch occupies residues 19–26; that stretch reads GHVDHGKT. Position 19 to 26 (19 to 26) interacts with GTP; that stretch reads GHVDHGKT. Residue Thr-26 participates in Mg(2+) binding. The interval 60-64 is G2; it reads GITIN. Positions 81–84 are G3; sequence DCPG. GTP-binding positions include 81 to 85 and 136 to 139; these read DCPGH and NKVD. The G4 stretch occupies residues 136 to 139; that stretch reads NKVD. The segment at 173 to 175 is G5; sequence SAF.

The protein belongs to the TRAFAC class translation factor GTPase superfamily. Classic translation factor GTPase family. EF-Tu/EF-1A subfamily. As to quaternary structure, monomer.

It localises to the cytoplasm. It carries out the reaction GTP + H2O = GDP + phosphate + H(+). GTP hydrolase that promotes the GTP-dependent binding of aminoacyl-tRNA to the A-site of ribosomes during protein biosynthesis. The chain is Elongation factor Tu from Treponema pallidum (strain Nichols).